The chain runs to 654 residues: Cysteine-rich receptor-like protein kinase 40 (654 aa).

The N-terminal stretch at methionine 1–alanine 27 is a signal peptide. 2 Gnk2-homologous domains span residues valine 28–threonine 131 and tryptophan 143–phenylalanine 250. Residues valine 28–glycine 287 lie on the Extracellular side of the membrane. 6 N-linked (GlcNAc...) asparagine glycosylation sites follow: asparagine 38, asparagine 65, asparagine 128, asparagine 154, asparagine 167, and asparagine 256. Residues glycine 288 to isoleucine 308 form a helical membrane-spanning segment. Over lysine 309–arginine 654 the chain is Cytoplasmic. One can recognise a Protein kinase domain in the interval phenylalanine 348–isoleucine 619. ATP contacts are provided by residues leucine 354–valine 362 and lysine 376. Residue tyrosine 421 is modified to Phosphotyrosine. Aspartate 473 serves as the catalytic Proton acceptor. A Phosphoserine modification is found at serine 477. Residue threonine 513 is modified to Phosphothreonine. Tyrosine 521 carries the post-translational modification Phosphotyrosine.

The protein belongs to the protein kinase superfamily. Ser/Thr protein kinase family. CRK subfamily.

It is found in the membrane. The enzyme catalyses L-seryl-[protein] + ATP = O-phospho-L-seryl-[protein] + ADP + H(+). The catalysed reaction is L-threonyl-[protein] + ATP = O-phospho-L-threonyl-[protein] + ADP + H(+). This is Cysteine-rich receptor-like protein kinase 40 (CRK40) from Arabidopsis thaliana (Mouse-ear cress).